A 239-amino-acid polypeptide reads, in one-letter code: Lytic polysaccharide monooxygenase-like protein X325 (239 aa).

An N-terminal signal peptide occupies residues 1–24 (MVLPSSVSQWAALIALLCAGLANA). His25 is a Cu(2+) binding site. Asn41, Asn56, Asn79, Asn117, Asn150, and Asn197 each carry an N-linked (GlcNAc...) asparagine glycan. 2 disulfides stabilise this stretch: Cys71-Cys176 and Cys141-Cys195. Ser214 is lipidated: GPI-anchor amidated serine. Residues 215 to 239 (AAAPKSSLMSVLPVYMVALLSWAMM) constitute a propeptide, removed in mature form.

This sequence belongs to the X325 family. Cu(2+) serves as cofactor.

The protein resides in the cell membrane. In terms of biological role, lytic polysaccharide monooxygenase-like protein that has diverged to biological functions other than polysaccharide degradation since it does not perform oxidative cleavage of polysaccharides. Acts as a cell surface-bound protein that functions in the copper-accumulation pathway. May also act as the major cell wall sensor that regulates MAP kinase-dependent hyphal anastomosis, the fusion of hyphal cells. This chain is Lytic polysaccharide monooxygenase-like protein X325, found in Aspergillus fumigatus (strain ATCC MYA-4609 / CBS 101355 / FGSC A1100 / Af293) (Neosartorya fumigata).